The following is a 464-amino-acid chain: Glycine--tRNA ligase (464 aa).

2 residues coordinate substrate: Arg104 and Glu175. ATP-binding positions include 207 to 209, 217 to 222, 292 to 293, and 336 to 339; these read RNE, FRTREF, EL, and GVNR. 222 to 226 serves as a coordination point for substrate; that stretch reads FEQME. Position 332–336 (332–336) interacts with substrate; that stretch reads EPALG.

This sequence belongs to the class-II aminoacyl-tRNA synthetase family. In terms of assembly, homodimer.

The protein localises to the cytoplasm. The enzyme catalyses tRNA(Gly) + glycine + ATP = glycyl-tRNA(Gly) + AMP + diphosphate. In terms of biological role, catalyzes the attachment of glycine to tRNA(Gly). This Leptospira interrogans serogroup Icterohaemorrhagiae serovar Lai (strain 56601) protein is Glycine--tRNA ligase.